The chain runs to 275 residues: Adenosylcobinamide-GDP ribazoletransferase (275 aa).

The next 6 membrane-spanning stretches (helical) occupy residues 52–72 (VVGVVFGVLTAVLLGLLGVLG), 73–93 (VTPLLTAVLVVIMWELLNRMM), 126–146 (MGFSAVLFSLLVQVTAVAALV), 181–201 (FGAMVVGTVRLWWVAAWLVAL), 208–228 (VAVWAAGPAVVWIVPAAGIIA), and 251–271 (IGAGIHLSAAVVAVFCAVAVA).

This sequence belongs to the CobS family. Mg(2+) is required as a cofactor.

It localises to the cell membrane. The catalysed reaction is alpha-ribazole + adenosylcob(III)inamide-GDP = adenosylcob(III)alamin + GMP + H(+). The enzyme catalyses alpha-ribazole 5'-phosphate + adenosylcob(III)inamide-GDP = adenosylcob(III)alamin 5'-phosphate + GMP + H(+). The protein operates within cofactor biosynthesis; adenosylcobalamin biosynthesis; adenosylcobalamin from cob(II)yrinate a,c-diamide: step 7/7. Functionally, joins adenosylcobinamide-GDP and alpha-ribazole to generate adenosylcobalamin (Ado-cobalamin). Also synthesizes adenosylcobalamin 5'-phosphate from adenosylcobinamide-GDP and alpha-ribazole 5'-phosphate. This is Adenosylcobinamide-GDP ribazoletransferase from Corynebacterium efficiens (strain DSM 44549 / YS-314 / AJ 12310 / JCM 11189 / NBRC 100395).